Reading from the N-terminus, the 415-residue chain is Casein kinase I isoform delta (415 aa).

The region spanning 9 to 277 (YRLGRKIGSG…YLRQLFRNLF (269 aa)) is the Protein kinase domain. ATP is bound by residues 15–23 (IGSGSFGDI) and Lys-38. The Proton acceptor role is filled by Asp-128. The segment at 278–364 (HRQGFSYDYV…TSPRPVSGME (87 aa)) is centrosomal localization signal (CLS). Positions 301 to 315 (ADDAERERRDREERL) are enriched in basic and acidic residues. The segment at 301-415 (ADDAERERRD…SSGLQSVVHR (115 aa)) is disordered. Positions 317 to 342 (HSRNPATRGLPSTASGRLRGTQEVAP) are autoinhibitory. A phosphoserine mark is found at Ser-328 and Ser-331. A compositionally biased stretch (polar residues) spans 347-358 (TPTSHTANTSPR). At Ser-370 the chain carries Phosphoserine. Residue Arg-375 is modified to Omega-N-methylarginine. Positions 380–400 (NISSSDLTGRQDTSRMSTSQI) are enriched in polar residues. Phosphoserine occurs at positions 382, 383, 384, 407, and 411.

This sequence belongs to the protein kinase superfamily. CK1 Ser/Thr protein kinase family. Casein kinase I subfamily. Monomer. Component of the circadian core oscillator, which includes the CRY proteins, CLOCK, or NPAS2, ARTNL/BMAL1 or ARTNL2/BMAL2, CSNK1D and/or CSNK1E, TIMELESS and the PER proteins. Interacts with DNMT1 and MAP1A. Interacts directly with PER1 and PER2 which may lead to their degradation. Interacts with MAPT/TAU, SNAPIN, DBNDD2, AIB1/NCOA3 and ESR1. Interacts with AKAP9/AKAP450; this interaction promotes centrosomal subcellular location. Binds to tubulins in mitotic cells upon DNA damage. Interacts with GJA1. Interacts with DDX3X; this interaction enhances CSNK1D kinase activity in vitro, but it is unclear whether this interaction is physiologically relevant. Interacts with FAM83A, FAM83B, FAM83E and FAM83H (via DUF1669). Post-translationally, autophosphorylated on serine and threonine residues; this autophosphorylation represses activity. Reactivated by phosphatase-mediated dephosphorylation. May be dephosphorylated by PP1.

The protein resides in the cytoplasm. The protein localises to the nucleus. Its subcellular location is the cytoskeleton. It is found in the microtubule organizing center. It localises to the centrosome. The protein resides in the perinuclear region. The protein localises to the cell membrane. Its subcellular location is the spindle. It is found in the golgi apparatus. The enzyme catalyses L-seryl-[protein] + ATP = O-phospho-L-seryl-[protein] + ADP + H(+). It carries out the reaction L-threonyl-[protein] + ATP = O-phospho-L-threonyl-[protein] + ADP + H(+). The catalysed reaction is L-seryl-[tau protein] + ATP = O-phospho-L-seryl-[tau protein] + ADP + H(+). It catalyses the reaction L-threonyl-[tau protein] + ATP = O-phospho-L-threonyl-[tau protein] + ADP + H(+). Drug-mediated inhibition leads to a delay of the oscillations with the magnitude of this effect dependent upon the timing of drug administration. Inhibited by phosphorylation. Exhibits substrate-dependent heparin activation. In terms of biological role, essential serine/threonine-protein kinase that regulates diverse cellular growth and survival processes including Wnt signaling, DNA repair and circadian rhythms. It can phosphorylate a large number of proteins. Casein kinases are operationally defined by their preferential utilization of acidic proteins such as caseins as substrates. Phosphorylates connexin-43/GJA1, MAP1A, SNAPIN, MAPT/TAU, TOP2A, DCK, HIF1A, EIF6, p53/TP53, DVL2, DVL3, ESR1, AIB1/NCOA3, DNMT1, PKD2, YAP1, PER1 and PER2. Central component of the circadian clock. In balance with PP1, determines the circadian period length through the regulation of the speed and rhythmicity of PER1 and PER2 phosphorylation. Controls PER1 and PER2 nuclear transport and degradation. YAP1 phosphorylation promotes its SCF(beta-TRCP) E3 ubiquitin ligase-mediated ubiquitination and subsequent degradation. DNMT1 phosphorylation reduces its DNA-binding activity. Phosphorylation of ESR1 and AIB1/NCOA3 stimulates their activity and coactivation. Phosphorylation of DVL2 and DVL3 regulates WNT3A signaling pathway that controls neurite outgrowth. Phosphorylates NEDD9/HEF1. EIF6 phosphorylation promotes its nuclear export. Triggers down-regulation of dopamine receptors in the forebrain. Activates DCK in vitro by phosphorylation. TOP2A phosphorylation favors DNA cleavable complex formation. May regulate the formation of the mitotic spindle apparatus in extravillous trophoblast. Modulates connexin-43/GJA1 gap junction assembly by phosphorylation. Probably involved in lymphocyte physiology. Regulates fast synaptic transmission mediated by glutamate. The sequence is that of Casein kinase I isoform delta (CSNK1D) from Bos taurus (Bovine).